A 187-amino-acid chain; its full sequence is ATP synthase subunit delta (187 aa).

Belongs to the ATPase delta chain family. F-type ATPases have 2 components, F(1) - the catalytic core - and F(0) - the membrane proton channel. F(1) has five subunits: alpha(3), beta(3), gamma(1), delta(1), epsilon(1). F(0) has three main subunits: a(1), b(2) and c(10-14). The alpha and beta chains form an alternating ring which encloses part of the gamma chain. F(1) is attached to F(0) by a central stalk formed by the gamma and epsilon chains, while a peripheral stalk is formed by the delta and b chains.

The protein localises to the cell membrane. F(1)F(0) ATP synthase produces ATP from ADP in the presence of a proton or sodium gradient. F-type ATPases consist of two structural domains, F(1) containing the extramembraneous catalytic core and F(0) containing the membrane proton channel, linked together by a central stalk and a peripheral stalk. During catalysis, ATP synthesis in the catalytic domain of F(1) is coupled via a rotary mechanism of the central stalk subunits to proton translocation. Its function is as follows. This protein is part of the stalk that links CF(0) to CF(1). It either transmits conformational changes from CF(0) to CF(1) or is implicated in proton conduction. In Mesomycoplasma hyopneumoniae (strain 232) (Mycoplasma hyopneumoniae), this protein is ATP synthase subunit delta.